Consider the following 295-residue polypeptide: Small ribosomal subunit protein uS2 (295 aa).

The segment at 263 to 295 (KKFSKTKNIDEETNTEFEQALNDADENKNSDNA) is disordered.

The protein belongs to the universal ribosomal protein uS2 family.

The polypeptide is Small ribosomal subunit protein uS2 (Rickettsia massiliae (strain Mtu5)).